The primary structure comprises 244 residues: NAD(P)H-quinone oxidoreductase subunit K (244 aa).

Positions 60, 61, 125, and 156 each coordinate [4Fe-4S] cluster. The tract at residues 213-244 is disordered; it reads TSANSIPSSKKEKITELPDNNEKAEIIDTLEN. Positions 221–238 are enriched in basic and acidic residues; the sequence is SKKEKITELPDNNEKAEI.

Belongs to the complex I 20 kDa subunit family. As to quaternary structure, NDH-1 can be composed of about 15 different subunits; different subcomplexes with different compositions have been identified which probably have different functions. The cofactor is [4Fe-4S] cluster.

Its subcellular location is the cellular thylakoid membrane. It catalyses the reaction a plastoquinone + NADH + (n+1) H(+)(in) = a plastoquinol + NAD(+) + n H(+)(out). The enzyme catalyses a plastoquinone + NADPH + (n+1) H(+)(in) = a plastoquinol + NADP(+) + n H(+)(out). NDH-1 shuttles electrons from an unknown electron donor, via FMN and iron-sulfur (Fe-S) centers, to quinones in the respiratory and/or the photosynthetic chain. The immediate electron acceptor for the enzyme in this species is believed to be plastoquinone. Couples the redox reaction to proton translocation, and thus conserves the redox energy in a proton gradient. Cyanobacterial NDH-1 also plays a role in inorganic carbon-concentration. This chain is NAD(P)H-quinone oxidoreductase subunit K, found in Prochlorococcus marinus (strain MIT 9301).